The primary structure comprises 272 residues: Undecaprenyl-diphosphatase (272 aa).

The next 8 helical transmembrane spans lie at 6–26 (SLLV…LPVS), 45–65 (AKTF…VMFW), 89–109 (LSLI…LVFH), 115–135 (LFNP…LIIA), 156–176 (AFFI…RSGA), 189–209 (YAAS…ATAL), 221–241 (ADLP…LVAI), and 251–271 (ISFI…FAVF).

It belongs to the UppP family.

The protein localises to the cell inner membrane. It catalyses the reaction di-trans,octa-cis-undecaprenyl diphosphate + H2O = di-trans,octa-cis-undecaprenyl phosphate + phosphate + H(+). In terms of biological role, catalyzes the dephosphorylation of undecaprenyl diphosphate (UPP). Confers resistance to bacitracin. The sequence is that of Undecaprenyl-diphosphatase from Cronobacter sakazakii (strain ATCC BAA-894) (Enterobacter sakazakii).